The chain runs to 241 residues: Carboxysome assembly protein CcmN (241 aa).

Residues 123–206 (GASSPTTDSV…PTAPTVVTTA (84 aa)) are disordered. The segment covering 185 to 195 (QISSNRSPGES) has biased composition (polar residues). The segment covering 196–206 (TPTAPTVVTTA) has biased composition (low complexity). Positions 219–241 (VVGQVYINQLLLTLFPERRYFSS) match the Encapsulation peptide motif.

It belongs to the CcmN family. As to quaternary structure, interacts with full-length and the N-terminal 249 residues of CcmM; a probable CcmM-CcaA-CcmN complex can also be isolated. Interacts with CcmK.

The protein resides in the carboxysome. Its function is as follows. Required for carboxysome formation; the N-terminus interacts with CcmM which itself binds RuBisCO (ribulose bisphosphate carboxylase, rbcL-rbcS). May also contact shell protein CcmK to help assemble the carboxysome. In terms of biological role, beta-carboxysome assembly initiates when soluble RuBisCO is condensed into a liquid matrix in a pre-carboxysome by the RbcS-like domains of probably both forms of CcmM. CcmN interacts with the N-terminus of full-length CcmM, and then recruits the CcmK major shell protein via CcmN's encapsulation peptide. Shell formation requires CcmK proteins and CcmO. CcmL caps the otherwise elongated carboxysome. Once fully encapsulated carboxysomes are formed, they migrate within the cell probably via interactions with the cytoskeleton. This Synechocystis sp. (strain ATCC 27184 / PCC 6803 / Kazusa) protein is Carboxysome assembly protein CcmN.